A 107-amino-acid chain; its full sequence is U1-lycotoxin-Ls1n (107 aa).

The first 20 residues, 1–20, serve as a signal peptide directing secretion; sequence MMKVLVVVALLVTLISYSSS. The propeptide occupies 21-41; it reads EGIDDLEADELLSLMANEQTR. Cystine bridges form between Cys44/Cys59, Cys51/Cys68, Cys58/Cys86, and Cys70/Cys84.

This sequence belongs to the neurotoxin 19 (CSTX) family. 04 (U1-Lctx) subfamily. As to expression, expressed by the venom gland.

It localises to the secreted. The sequence is that of U1-lycotoxin-Ls1n from Lycosa singoriensis (Wolf spider).